The sequence spans 562 residues: 2-succinyl-5-enolpyruvyl-6-hydroxy-3-cyclohexene-1-carboxylate synthase (562 aa).

The protein belongs to the TPP enzyme family. MenD subfamily. As to quaternary structure, homodimer. The cofactor is Mg(2+). Mn(2+) serves as cofactor. It depends on thiamine diphosphate as a cofactor.

The enzyme catalyses isochorismate + 2-oxoglutarate + H(+) = 5-enolpyruvoyl-6-hydroxy-2-succinyl-cyclohex-3-ene-1-carboxylate + CO2. It functions in the pathway quinol/quinone metabolism; 1,4-dihydroxy-2-naphthoate biosynthesis; 1,4-dihydroxy-2-naphthoate from chorismate: step 2/7. Its pathway is cofactor biosynthesis; phylloquinone biosynthesis. Functionally, catalyzes the thiamine diphosphate-dependent decarboxylation of 2-oxoglutarate and the subsequent addition of the resulting succinic semialdehyde-thiamine pyrophosphate anion to isochorismate to yield 2-succinyl-5-enolpyruvyl-6-hydroxy-3-cyclohexene-1-carboxylate (SEPHCHC). The polypeptide is 2-succinyl-5-enolpyruvyl-6-hydroxy-3-cyclohexene-1-carboxylate synthase (Thermosynechococcus vestitus (strain NIES-2133 / IAM M-273 / BP-1)).